The primary structure comprises 306 residues: uncharacterized protein (306 aa).

The active-site Proton acceptor is the Asp-204.

It belongs to the aminoglycoside phosphotransferase family.

This is an uncharacterized protein from Bacillus subtilis (strain 168).